We begin with the raw amino-acid sequence, 342 residues long: MDILKAEIARKRKLIEEKELIDDSKKYFKRAELARKEEEDYYRRCGYKMDKPEEEAPQSTSANPVLELELTEEKLPMTLSRQEVIRRLRERGEPIRLFGESDYDAFQRLRKIEILAPEVNKGLRNDLKAAMDKIDQQYLNEIVGGAEGAELDTQHDLKVHEENTTIEELEALGASLGNGNDVRDMDIINKVLRFLLGVWAKDLNSREDHIKRSVQGKLASATQKQTESYLEPLFRKLRKKNLPADIKESITDIIKFMLEREYVKANDAYLQMAIGNAPWPIGVTMVGIHARTGREKIFSKHVAHVLNDETQRKYIQGLKRLMTICQKHFPTDPSKCVEYNAL.

It belongs to the PRP18 family. In terms of assembly, interacts with the spliceosome. Part of a complex containing U4/U6 snRNPs.

Its subcellular location is the nucleus speckle. Participates in the second step of pre-mRNA splicing. This is Pre-mRNA-splicing factor 18 (prpf18) from Danio rerio (Zebrafish).